Here is a 198-residue protein sequence, read N- to C-terminus: ADP-ribosylation factor-like protein 3 (198 aa).

Methionine 1 carries the N-acetylmethionine modification. 24–31 (GLDNAGKT) provides a ligand contact to GTP. Lysine 50 is covalently cross-linked (Glycyl lysine isopeptide (Lys-Gly) (interchain with G-Cter in ubiquitin)). Residues 74 to 78 (DVGGQ) and 133 to 136 (NKQD) each bind GTP.

This sequence belongs to the small GTPase superfamily. Arf family. In terms of assembly, interacts with SYS1 and SLO1.

It localises to the golgi apparatus. Its function is as follows. Involved in the targeting of ARL1 to the Golgi. Can bind and hydrolyze GTP. The protein is ADP-ribosylation factor-like protein 3 (ARL3) of Saccharomyces cerevisiae (strain ATCC 204508 / S288c) (Baker's yeast).